The chain runs to 78 residues: Large ribosomal subunit protein bL28 (78 aa).

The protein belongs to the bacterial ribosomal protein bL28 family.

This chain is Large ribosomal subunit protein bL28, found in Rippkaea orientalis (strain PCC 8801 / RF-1) (Cyanothece sp. (strain PCC 8801)).